The chain runs to 396 residues: Ribosomal RNA large subunit methyltransferase I (396 aa).

The PUA domain occupies Ala-2–Phe-79.

It belongs to the methyltransferase superfamily. RlmI family.

The protein localises to the cytoplasm. It carries out the reaction cytidine(1962) in 23S rRNA + S-adenosyl-L-methionine = 5-methylcytidine(1962) in 23S rRNA + S-adenosyl-L-homocysteine + H(+). Its function is as follows. Specifically methylates the cytosine at position 1962 (m5C1962) of 23S rRNA. In Shewanella sp. (strain MR-4), this protein is Ribosomal RNA large subunit methyltransferase I.